Consider the following 515-residue polypeptide: MRKIKFFDTTLRDGEQSAGVNLNLQEKLEIARQLERLRVDIIEAGFPASSKGDFEAVKQIAETVRTCSVTGLSRSVRSDIDAAWEALKGGAEPRLHLFIATSPIHMVHKLRMTPEQVIEAAVEAVKYAKRFFPIVQWSAEDACRSELPFLAKIVAEVIKAGASVINIPDTVGYITPKEYGEIFLYLQNNVPNIENVSLSAHCHDDLGMAVVNSLSAIEHGATQVECTINGIGERAGNAALEEIAVALHIRKDYYQVETRLNLQEIKRTSNLVSKLTGVVVPPNKAVVGKNAFAHESGIHQDGVLKEKTTYEIISPELVGVPSNSMVLGKHSGRHALRNRVEELGYTLSDEEINQLFVRFKELADKKKDITDDDLIALIFEEKFDHFKDFYQLSSIQVQYGTNQIPTAVVVLKDGKGNEIQEAATGAGSVEALYNTLERCFQTPVTLLDYRIESVGGGRDALAQVFVKVRAHDIETSGRGTAQDVLEASAKAYINAINRVFMIEAMRGENEKVATP.

Residues 4–266 (IKFFDTTLRD…ETRLNLQEIK (263 aa)) enclose the Pyruvate carboxyltransferase domain. Positions 13, 201, 203, and 237 each coordinate Mn(2+). The tract at residues 391 to 515 (QLSSIQVQYG…RGENEKVATP (125 aa)) is regulatory domain.

The protein belongs to the alpha-IPM synthase/homocitrate synthase family. LeuA type 1 subfamily. As to quaternary structure, homodimer. Mn(2+) is required as a cofactor.

It is found in the cytoplasm. It catalyses the reaction 3-methyl-2-oxobutanoate + acetyl-CoA + H2O = (2S)-2-isopropylmalate + CoA + H(+). Its pathway is amino-acid biosynthesis; L-leucine biosynthesis; L-leucine from 3-methyl-2-oxobutanoate: step 1/4. Catalyzes the condensation of the acetyl group of acetyl-CoA with 3-methyl-2-oxobutanoate (2-ketoisovalerate) to form 3-carboxy-3-hydroxy-4-methylpentanoate (2-isopropylmalate). The polypeptide is 2-isopropylmalate synthase (Geobacillus kaustophilus (strain HTA426)).